Reading from the N-terminus, the 183-residue chain is Inosine triphosphate pyrophosphatase (183 aa).

Residue 8-13 (TGNKNK) participates in ITP binding. Glu36 contributes to the Mg(2+) binding site. Residues Lys48, 64-65 (DT), Lys81, 140-143 (FGWD), Lys161, and 166-167 (HR) contribute to the ITP site.

This sequence belongs to the HAM1 NTPase family. As to quaternary structure, homodimer. It depends on Mg(2+) as a cofactor. Mn(2+) is required as a cofactor.

Its subcellular location is the cytoplasm. The protein localises to the nucleus. The catalysed reaction is ITP + H2O = IMP + diphosphate + H(+). It carries out the reaction dITP + H2O = dIMP + diphosphate + H(+). The enzyme catalyses XTP + H2O = XMP + diphosphate + H(+). Functionally, pyrophosphatase that hydrolyzes non-canonical purine nucleotides such as inosine triphosphate (ITP), deoxyinosine triphosphate (dITP) or xanthosine 5'-triphosphate (XTP) to their respective monophosphate derivatives. The enzyme does not distinguish between the deoxy- and ribose forms. Probably excludes non-canonical purines from RNA and DNA precursor pools, thus preventing their incorporation into RNA and DNA and avoiding chromosomal lesions. In Emericella nidulans (strain FGSC A4 / ATCC 38163 / CBS 112.46 / NRRL 194 / M139) (Aspergillus nidulans), this protein is Inosine triphosphate pyrophosphatase.